A 238-amino-acid chain; its full sequence is Mannose-binding protein A (238 aa).

A signal peptide spans 1–17; sequence MLLLPLLVLLCVVSVSS. Over residues 38–49 the composition is skewed to basic and acidic residues; that stretch reads DGRDGPKGEKGE. The segment at 38–87 is disordered; it reads DGRDGPKGEKGEPGQGLRGLQGPPGKLGPPGSVGAPGSQGPKGQKGDRGD. The region spanning 39–88 is the Collagen-like domain; that stretch reads GRDGPKGEKGEPGQGLRGLQGPPGKLGPPGSVGAPGSQGPKGQKGDRGDS. At Pro43 the chain carries 4-hydroxyproline. Residues Lys44 and Lys47 each carry the 5-hydroxylysine modification. 2 O-linked (Gal...) hydroxylysine glycosylation sites follow: Lys44 and Lys47. 4-hydroxyproline occurs at positions 50, 61, 67, 73, and 78. 5-hydroxylysine is present on residues Lys79 and Lys82. O-linked (Gal...) hydroxylysine glycosylation is found at Lys79 and Lys82. Residues 143–238 form the C-type lectin domain; it reads ALCSELRGTV…SHTAVCEFPA (96 aa). 2 disulfide bridges follow: Cys145/Cys234 and Cys212/Cys226. 9 residues coordinate Ca(2+): Asp178, Glu182, Glu202, Asn204, Asp205, Glu210, Asp211, Asn222, and Asp223. Residues 202–210 are calcium-dependent carbohydrate binding; the sequence is EPNDHGSGE.

As to quaternary structure, homotrimer. Forms higher oligomeric complexes formed by the association of two, three or more homotrimers. Oligomerization occurs in the endoplasmic reticulum. Interacts with MASP1 and MASP2. Hydroxylated on lysine and proline residues within the collagen-like domain. Post-translationally, O-glycosylated. O-linked glycans on hydroxylysine residues consist of Glc-Gal disaccharides bound to the oxygen atom of post-translationally added hydroxyl groups. As to expression, detected in blood serum (at protein level).

The protein resides in the secreted. Its function is as follows. Calcium-dependent lectin. Plays a role in the innate immune response by binding mannose, fucose and N-acetylglucosamine moieties on different microorganisms and mediating activation of the lectin complement pathway. Binds to late apoptotic cells, as well as to apoptotic blebs and to necrotic cells, but not to early apoptotic cells, facilitating their uptake by macrophages. This chain is Mannose-binding protein A (Mbl1), found in Rattus norvegicus (Rat).